Reading from the N-terminus, the 355-residue chain is Peptide chain release factor 1 (355 aa).

Position 230 is an N5-methylglutamine (glutamine 230).

It belongs to the prokaryotic/mitochondrial release factor family. Post-translationally, methylated by PrmC. Methylation increases the termination efficiency of RF1.

The protein localises to the cytoplasm. Functionally, peptide chain release factor 1 directs the termination of translation in response to the peptide chain termination codons UAG and UAA. The sequence is that of Peptide chain release factor 1 from Geotalea uraniireducens (strain Rf4) (Geobacter uraniireducens).